The primary structure comprises 312 residues: tRNA dimethylallyltransferase (312 aa).

12–19 (GPTAIGKS) is a binding site for ATP. 14-19 (TAIGKS) lines the substrate pocket. Interaction with substrate tRNA stretches follow at residues 38–41 (DSKL) and 162–166 (QRVLR).

It belongs to the IPP transferase family. In terms of assembly, monomer. It depends on Mg(2+) as a cofactor.

It catalyses the reaction adenosine(37) in tRNA + dimethylallyl diphosphate = N(6)-dimethylallyladenosine(37) in tRNA + diphosphate. Catalyzes the transfer of a dimethylallyl group onto the adenine at position 37 in tRNAs that read codons beginning with uridine, leading to the formation of N6-(dimethylallyl)adenosine (i(6)A). The polypeptide is tRNA dimethylallyltransferase (Buchnera aphidicola subsp. Cinara cedri (strain Cc)).